We begin with the raw amino-acid sequence, 215 residues long: Imidazole glycerol phosphate synthase subunit HisH (215 aa).

One can recognise a Glutamine amidotransferase type-1 domain in the interval Thr3–Leu215. Residue Cys81 is the Nucleophile of the active site. Catalysis depends on residues His196 and Glu198.

In terms of assembly, heterodimer of HisH and HisF.

It is found in the cytoplasm. The enzyme catalyses 5-[(5-phospho-1-deoxy-D-ribulos-1-ylimino)methylamino]-1-(5-phospho-beta-D-ribosyl)imidazole-4-carboxamide + L-glutamine = D-erythro-1-(imidazol-4-yl)glycerol 3-phosphate + 5-amino-1-(5-phospho-beta-D-ribosyl)imidazole-4-carboxamide + L-glutamate + H(+). It carries out the reaction L-glutamine + H2O = L-glutamate + NH4(+). It participates in amino-acid biosynthesis; L-histidine biosynthesis; L-histidine from 5-phospho-alpha-D-ribose 1-diphosphate: step 5/9. Its function is as follows. IGPS catalyzes the conversion of PRFAR and glutamine to IGP, AICAR and glutamate. The HisH subunit catalyzes the hydrolysis of glutamine to glutamate and ammonia as part of the synthesis of IGP and AICAR. The resulting ammonia molecule is channeled to the active site of HisF. The sequence is that of Imidazole glycerol phosphate synthase subunit HisH from Bifidobacterium longum (strain NCC 2705).